Reading from the N-terminus, the 777-residue chain is Hepatocyte growth factor-regulated tyrosine kinase substrate (777 aa).

One can recognise a VHS domain in the interval 15–143; the sequence is ATSQLLLETD…IMKVEGHVFP (129 aa). The FYVE-type zinc finger occupies 160–220; the sequence is WVDAEECHRC…VCEPCYEQLN (61 aa). Zn(2+) contacts are provided by cysteine 166, cysteine 169, cysteine 182, cysteine 185, cysteine 190, and cysteine 193. Lysine 207 is subject to N6-acetyllysine. Zn(2+) contacts are provided by cysteine 212 and cysteine 215. Position 216 is a phosphotyrosine (tyrosine 216). Residues 223–319 form a disordered region; the sequence is AEGKATSTTE…SPVNSSAPLA (97 aa). Positions 225 to 543 are interaction with SNX1; the sequence is GKATSTTELP…QRLQEQEKER (319 aa). One can recognise a UIM domain in the interval 258-277; it reads QEEEELQLALALSQSEAEEK. A compositionally biased stretch (low complexity) spans 290–311; the sequence is PKAEPMPSASSAPPASSLYSSP. Residues tyrosine 308, tyrosine 329, and tyrosine 334 each carry the phosphotyrosine modification. Residues 338-407 are disordered; sequence KQEEARKSPT…NGESEESHEQ (70 aa). An interaction with SNAP25 and TRAK2 region spans residues 445–543; the sequence is SINGMHPQLL…QRLQEQEKER (99 aa). Residues 454–572 form an interaction with STAM region; sequence LELLNQLDER…FPLPYAQLQA (119 aa). Residues 480-777 form an interaction with NF2 region; that stretch reads ARGALSALRE…GSEAQLISFD (298 aa). N6-succinyllysine is present on lysine 551. The tract at residues 718-777 is disordered; sequence LPSQDASLPPQQPYIAGQQPMYQQMAPSGGPPQQQPPVAQQPQAQGPPAQGSEAQLISFD. Over residues 753-768 the composition is skewed to low complexity; that stretch reads PPVAQQPQAQGPPAQG.

As to quaternary structure, component of the ESCRT-0 complex composed of STAM or STAM2 and HGS. Part of a complex at least composed of HSG, STAM2 (or probably STAM) and EPS15. Interacts with STAM. Interacts with STAM2. Interacts with EPS15; the interaction is direct, calcium-dependent and inhibited by SNAP25. Identified in a complex with STAM and LITAF. Found in a complex with STAM and E3 ligase ITCH and DTX3L. Interacts with E3 ligase DTX3L; the interaction brings together STAM and HSG, promotes their recruitment to early endosomes and decreases STAM and HGS ubiquitination by ITCH. Interacts with NF2; the interaction is direct. Interacts with ubiquitin; the interaction is direct. Interacts with VPS37C. Interacts with SMAD1, SMAD2 and SMAD3. Interacts with TSG101; the interaction mediates the association with the ESCRT-I complex. Interacts with SNAP25; the interaction is direct and decreases with addition of increasing concentrations of free calcium. Interacts with SNX1; the interaction is direct. Component of a 550 kDa membrane complex at least composed of HGS and SNX1 but excluding EGFR. Interacts with TRAK1. Interacts with TRAK2. Component of the CART complex, at least composed of ACTN4, HGS/HRS, MYO5B and TRIM3. Interacts (via UIM domain) with UBQLN1 (via ubiquitin-like domain). Interacts with ARRDC3. Identified in a complex containing at least ARRDC4, AVPR2 and HGS. Interacts with LAPTM4B; promotes HGS ubiquitination. Phosphorylated on Tyr-334. A minor site of phosphorylation on Tyr-329 is detected. Phosphorylation occurs in response to EGF, IL-2, GM-CSF and HGF. Post-translationally, ubiquitinated. Ubiquitinated by ITCH. In terms of tissue distribution, ubiquitous expression in adult and fetal tissues with higher expression in testis and peripheral blood leukocytes.

The protein localises to the cytoplasm. Its subcellular location is the early endosome membrane. It localises to the endosome. It is found in the multivesicular body membrane. Its function is as follows. Involved in intracellular signal transduction mediated by cytokines and growth factors. When associated with STAM, it suppresses DNA signaling upon stimulation by IL-2 and GM-CSF. Could be a direct effector of PI3-kinase in vesicular pathway via early endosomes and may regulate trafficking to early and late endosomes by recruiting clathrin. May concentrate ubiquitinated receptors within clathrin-coated regions. Involved in down-regulation of receptor tyrosine kinase via multivesicular body (MVBs) when complexed with STAM (ESCRT-0 complex). The ESCRT-0 complex binds ubiquitin and acts as a sorting machinery that recognizes ubiquitinated receptors and transfers them to further sequential lysosomal sorting/trafficking processes. May contribute to the efficient recruitment of SMADs to the activin receptor complex. Involved in receptor recycling via its association with the CART complex, a multiprotein complex required for efficient transferrin receptor recycling but not for EGFR degradation. This is Hepatocyte growth factor-regulated tyrosine kinase substrate (HGS) from Homo sapiens (Human).